A 357-amino-acid chain; its full sequence is NADH-quinone oxidoreductase subunit H (357 aa).

Helical transmembrane passes span 18–38, 92–112, 127–147, 165–185, 206–226, 268–288, 294–314, and 329–349; these read VAWMVVWSLVKIVVIAVPIIL, VLFVVAPVVTLMPALAAWAVV, LLYIMAITSIGVYGVIVAGWA, VSYELAIGFVLVSVLLVSGSL, FLSWNWLPLLPLFIIYVISAV, ILLSCMAAIMFLGGWMSPIDI, IPGWIWLGIKTFCVVSMFVWF, and LGWKIFIPLTGVWLVVLAIWM.

This sequence belongs to the complex I subunit 1 family. NDH-1 is composed of 14 different subunits. Subunits NuoA, H, J, K, L, M, N constitute the membrane sector of the complex.

The protein localises to the cell inner membrane. The enzyme catalyses a quinone + NADH + 5 H(+)(in) = a quinol + NAD(+) + 4 H(+)(out). Its function is as follows. NDH-1 shuttles electrons from NADH, via FMN and iron-sulfur (Fe-S) centers, to quinones in the respiratory chain. The immediate electron acceptor for the enzyme in this species is believed to be ubiquinone. Couples the redox reaction to proton translocation (for every two electrons transferred, four hydrogen ions are translocated across the cytoplasmic membrane), and thus conserves the redox energy in a proton gradient. This subunit may bind ubiquinone. In Bordetella bronchiseptica (strain ATCC BAA-588 / NCTC 13252 / RB50) (Alcaligenes bronchisepticus), this protein is NADH-quinone oxidoreductase subunit H.